A 102-amino-acid chain; its full sequence is Large ribosomal subunit protein bL21 (102 aa).

The protein belongs to the bacterial ribosomal protein bL21 family. In terms of assembly, part of the 50S ribosomal subunit. Contacts protein L20.

Functionally, this protein binds to 23S rRNA in the presence of protein L20. This is Large ribosomal subunit protein bL21 from Sorangium cellulosum (strain So ce56) (Polyangium cellulosum (strain So ce56)).